A 602-amino-acid chain; its full sequence is Elongation factor 4 (602 aa).

Residues 2-184 (KHIRNFSIIA…AIVAKVPAPR (183 aa)) enclose the tr-type G domain. GTP-binding positions include 14–19 (DHGKST) and 131–134 (NKMD).

The protein belongs to the TRAFAC class translation factor GTPase superfamily. Classic translation factor GTPase family. LepA subfamily.

It is found in the cell inner membrane. It carries out the reaction GTP + H2O = GDP + phosphate + H(+). Required for accurate and efficient protein synthesis under certain stress conditions. May act as a fidelity factor of the translation reaction, by catalyzing a one-codon backward translocation of tRNAs on improperly translocated ribosomes. Back-translocation proceeds from a post-translocation (POST) complex to a pre-translocation (PRE) complex, thus giving elongation factor G a second chance to translocate the tRNAs correctly. Binds to ribosomes in a GTP-dependent manner. The polypeptide is Elongation factor 4 (Verminephrobacter eiseniae (strain EF01-2)).